The chain runs to 412 residues: uncharacterized protein (412 aa).

One can recognise a UmuC domain in the interval 20 to 199 (FFYFDFDAFF…LPIVELPGIG (180 aa)).

The protein belongs to the DNA polymerase type-Y family.

This is an uncharacterized protein from Mycoplasma pneumoniae (strain ATCC 29342 / M129 / Subtype 1) (Mycoplasmoides pneumoniae).